A 282-amino-acid chain; its full sequence is Pantothenate synthetase (282 aa).

Residue 30 to 37 (MGNLHEGH) participates in ATP binding. The active-site Proton donor is histidine 37. Glutamine 61 contacts (R)-pantoate. Residue glutamine 61 participates in beta-alanine binding. ATP is bound at residue 149–152 (GEKD). A (R)-pantoate-binding site is contributed by glutamine 155. Residues valine 178 and 186–189 (KSSR) contribute to the ATP site.

This sequence belongs to the pantothenate synthetase family. As to quaternary structure, homodimer.

The protein localises to the cytoplasm. The enzyme catalyses (R)-pantoate + beta-alanine + ATP = (R)-pantothenate + AMP + diphosphate + H(+). It functions in the pathway cofactor biosynthesis; (R)-pantothenate biosynthesis; (R)-pantothenate from (R)-pantoate and beta-alanine: step 1/1. Catalyzes the condensation of pantoate with beta-alanine in an ATP-dependent reaction via a pantoyl-adenylate intermediate. This chain is Pantothenate synthetase, found in Marinobacter nauticus (strain ATCC 700491 / DSM 11845 / VT8) (Marinobacter aquaeolei).